The chain runs to 382 residues: MANVTLKPLCPLLEEMVQLPNHSNSSLRYIDHVSVLLHGLASLLGLVENGLILFVVGCRMRQTVVTTWVLHLALSDLLAAASLPFFTYFLAVGHSWELGTTFCKLHSSVFFLNMFASGFLLSAISLDRCLQVVRPVWAQNHRTVAVAHRVCLMLWALAVLNTIPYFVFRDTIPRLDGRIMCYYNLLLWNPGPDRDTTCDYRQKALAVSKFLLAFMVPLAIIASSHVAVSLRLHHRGRQRTGRFVRLVAAIVVAFVLCWGPYHIFSLLEARAHSVTTLRQLASRGLPFVTSLAFFNSVVNPLLYVFTCPDMLYKLRRSLRAVLESVLVEDSDQSGGLRNRRRRASSTATPASTLLLADRIPQLRPTRLIGWMRRGSAEVPQRV.

Over methionine 1–histidine 32 the chain is Extracellular. 3 N-linked (GlcNAc...) asparagine glycosylation sites follow: asparagine 3, asparagine 21, and asparagine 24. The chain crosses the membrane as a helical span at residues valine 33 to valine 55. Over valine 56–threonine 66 the chain is Cytoplasmic. A helical transmembrane segment spans residues threonine 67 to tyrosine 88. The Extracellular portion of the chain corresponds to phenylalanine 89–leucine 105. Residues cysteine 103 and cysteine 181 are joined by a disulfide bond. The chain crosses the membrane as a helical span at residues histidine 106–leucine 126. Residues aspartate 127 to alanine 145 are Cytoplasmic-facing. The chain crosses the membrane as a helical span at residues valine 146–valine 167. At phenylalanine 168–lysine 209 the chain is on the extracellular side. Residues phenylalanine 210–leucine 230 form a helical membrane-spanning segment. Residues arginine 231–leucine 246 are Cytoplasmic-facing. The chain crosses the membrane as a helical span at residues valine 247–glutamate 268. At alanine 269–phenylalanine 287 the chain is on the extracellular side. The helical transmembrane segment at valine 288–cysteine 307 threads the bilayer. At proline 308–aspartate 357 the chain is on the cytoplasmic side. Positions aspartate 329 to glutamine 332 match the Involved in the recycling of CRTH2 motif. Phosphoserine is present on residues serine 330 and serine 344.

This sequence belongs to the G-protein coupled receptor 1 family. Phosphorylated.

The protein localises to the cell membrane. Its function is as follows. Receptor for prostaglandin D2 (PGD2). Coupled to the G(i)-protein. Receptor activation may result in pertussis toxin-sensitive decreases in cAMP levels and Ca(2+) mobilization. PI3K signaling is also implicated in mediating PTGDR2 effects. PGD2 induced receptor internalization. CRTH2 internalization can be regulated by diverse kinases such as, PKC, PKA, GRK2, GPRK5/GRK5 and GRK6. Receptor activation is responsible, at least in part, in immune regulation and allergic/inflammation responses. The polypeptide is Prostaglandin D2 receptor 2 (Ptgdr2) (Mus musculus (Mouse)).